The primary structure comprises 214 residues: ATP phosphoribosyltransferase (214 aa).

The protein belongs to the ATP phosphoribosyltransferase family. Short subfamily. As to quaternary structure, heteromultimer composed of HisG and HisZ subunits.

The protein resides in the cytoplasm. The catalysed reaction is 1-(5-phospho-beta-D-ribosyl)-ATP + diphosphate = 5-phospho-alpha-D-ribose 1-diphosphate + ATP. Its pathway is amino-acid biosynthesis; L-histidine biosynthesis; L-histidine from 5-phospho-alpha-D-ribose 1-diphosphate: step 1/9. In terms of biological role, catalyzes the condensation of ATP and 5-phosphoribose 1-diphosphate to form N'-(5'-phosphoribosyl)-ATP (PR-ATP). Has a crucial role in the pathway because the rate of histidine biosynthesis seems to be controlled primarily by regulation of HisG enzymatic activity. This is ATP phosphoribosyltransferase from Marinobacter nauticus (strain ATCC 700491 / DSM 11845 / VT8) (Marinobacter aquaeolei).